Reading from the N-terminus, the 208-residue chain is FMN-dependent NADH:quinone oxidoreductase (208 aa).

FMN is bound by residues 17 to 19 (SNS), 99 to 102 (MWNL), and 143 to 146 (SRGG).

The protein belongs to the azoreductase type 1 family. Homodimer. Requires FMN as cofactor.

The catalysed reaction is 2 a quinone + NADH + H(+) = 2 a 1,4-benzosemiquinone + NAD(+). It carries out the reaction N,N-dimethyl-1,4-phenylenediamine + anthranilate + 2 NAD(+) = 2-(4-dimethylaminophenyl)diazenylbenzoate + 2 NADH + 2 H(+). Quinone reductase that provides resistance to thiol-specific stress caused by electrophilic quinones. In terms of biological role, also exhibits azoreductase activity. Catalyzes the reductive cleavage of the azo bond in aromatic azo compounds to the corresponding amines. The chain is FMN-dependent NADH:quinone oxidoreductase from Staphylococcus aureus (strain COL).